A 260-amino-acid chain; its full sequence is Acetylglutamate kinase (260 aa).

Substrate is bound by residues 46–47, R68, and N160; that span reads GG.

The protein belongs to the acetylglutamate kinase family. ArgB subfamily.

It localises to the cytoplasm. It catalyses the reaction N-acetyl-L-glutamate + ATP = N-acetyl-L-glutamyl 5-phosphate + ADP. It participates in amino-acid biosynthesis; L-arginine biosynthesis; N(2)-acetyl-L-ornithine from L-glutamate: step 2/4. Its function is as follows. Catalyzes the ATP-dependent phosphorylation of N-acetyl-L-glutamate. This is Acetylglutamate kinase from Shewanella baltica (strain OS223).